Consider the following 1171-residue polypeptide: Pyruvate:ferredoxin oxidoreductase (1171 aa).

Pyruvate-binding residues include T29 and R112. Residues 424 to 428 (SDGTV), K456, N556, and N598 each bind CoA. 4Fe-4S ferredoxin-type domains are found at residues 677 to 706 (NIPQ…PYLA) and 733 to 764 (FRIQ…MVPL). [4Fe-4S] cluster is bound by residues C686, C689, C692, C696, C742, C745, C748, C752, C809, and C812. Residues E814, C837, 967-969 (DGW), and 995-1000 (TEVYSN) contribute to the thiamine diphosphate site. A [4Fe-4S] cluster-binding site is contributed by C837. The Mg(2+) site is built by D967, T995, and V997. A pyruvate-binding site is contributed by N1000. Residue C1075 coordinates [4Fe-4S] cluster.

Belongs to the pyruvate:ferredoxin/flavodoxin oxidoreductase family. As to quaternary structure, homodimer. [4Fe-4S] cluster serves as cofactor. Requires thiamine diphosphate as cofactor. Mg(2+) is required as a cofactor.

The enzyme catalyses 2 oxidized [2Fe-2S]-[ferredoxin] + pyruvate + CoA = 2 reduced [2Fe-2S]-[ferredoxin] + acetyl-CoA + CO2 + H(+). Catalyzes the oxidative decarboxylation of pyruvate to acetyl-CoA and carbon dioxide. The two electrons that are generated as a result of pyruvate decarboxylation are used in the reduction of low potential ferredoxins, which provide reducing equivalents for central metabolism. Also catalyzes the reverse reaction, i.e. the synthesis of pyruvate from acetyl-CoA and carbon dioxide. Appears to function physiologically in both directions. The oxidation of pyruvate by PFOR is required to connect glycolysis and the Wood-Ljungdahl pathway of reductive acetogenesis. The conversion of acetyl-CoA to pyruvate links the Wood-Ljungdahl pathway of autotrophic CO2 fixation to the reductive tricarboxylic acid cycle. Can use methyl viologen as electron carrier in vitro. The polypeptide is Pyruvate:ferredoxin oxidoreductase (Moorella thermoacetica (strain ATCC 39073 / JCM 9320)).